The following is a 421-amino-acid chain: Glycosaminoglycan xylosylkinase homolog (421 aa).

An N-terminal signal peptide occupies residues 1–21 (MNKRSVIIAGIVASLLGLALG). Asparagine 83 is a glycosylation site (N-linked (GlcNAc...) asparagine). Residues glutamine 131 and lysine 147 each coordinate ATP. Mn(2+) is bound at residue aspartate 166. Disulfide bonds link cysteine 225-cysteine 240 and cysteine 230-cysteine 233. 252–255 (IYIV) serves as a coordination point for ATP. 2 disulfides stabilise this stretch: cysteine 285–cysteine 351 and cysteine 352–cysteine 409. The active site involves aspartate 314. 2 residues coordinate ATP: glutamate 319 and aspartate 329. Aspartate 329 provides a ligand contact to Mn(2+).

This sequence belongs to the FAM20 family. Mn(2+) is required as a cofactor.

The protein localises to the golgi apparatus. The protein resides in the endoplasmic reticulum. The catalysed reaction is 3-O-(beta-D-galactosyl-(1-&gt;3)-beta-D-galactosyl-(1-&gt;4)-beta-D-xylosyl)-L-seryl-[protein] + ATP = 3-O-(beta-D-galactosyl-(1-&gt;3)-beta-D-galactosyl-(1-&gt;4)-beta-D-2-O-phosphoxylosyl)-L-seryl-[protein] + ADP + H(+). Its function is as follows. Kylose kinase that mediates the 2-O-phosphorylation of xylose in the glycosaminoglycan-protein linkage region of proteoglycans. The protein is Glycosaminoglycan xylosylkinase homolog of Drosophila melanogaster (Fruit fly).